The sequence spans 284 residues: ELMO domain-containing protein B (284 aa).

An ELMO domain is found at 124–276; it reads EHEASLERLW…EFETKISQNS (153 aa).

This chain is ELMO domain-containing protein B (elmoB), found in Dictyostelium discoideum (Social amoeba).